The sequence spans 1225 residues: ABC transporter B family member 18 (1225 aa).

The next 6 membrane-spanning stretches (helical) occupy residues 23 to 43, 70 to 90, 146 to 168, 172 to 194, 252 to 272, and 284 to 304; these read MALG…IFFI, VALV…GYCW, LPNF…LLLW, IVGF…ALIR, GIAI…TWYG, and GTVS…GQSL. An ABC transmembrane type-1 1 domain is found at 23 to 312; the sequence is MALGLIGAVG…SLSNLKYFSE (290 aa). The region spanning 347-583 is the ABC transporter 1 domain; sequence VEFNHVKFTY…LDGQYTSLVR (237 aa). 382–389 contacts ATP; it reads GGSGSGKS. Asn-530 carries N-linked (GlcNAc...) asparagine glycosylation. The next 2 helical transmembrane spans lie at 657–677 and 699–719; these read ALYG…YSYS and IYVL…ISQH. One can recognise an ABC transmembrane type-1 2 domain in the interval 657-945; it reads ALYGCLGAAL…AGTMTKDLVK (289 aa). Asn-754 carries N-linked (GlcNAc...) asparagine glycosylation. A run of 4 helical transmembrane segments spans residues 780 to 800, 804 to 824, 880 to 900, and 919 to 939; these read LLVQ…VISW, IVMM…RVLL, SWLA…VSAL, and FLEI…AGTM. Asn-960 and Asn-1000 each carry an N-linked (GlcNAc...) asparagine glycan. Residues 980-1218 form the ABC transporter 2 domain; the sequence is ISFSNVDFAY…GPKGAYFSLV (239 aa). 1015–1022 is a binding site for ATP; sequence GPSGSGKS. N-linked (GlcNAc...) asparagine glycosylation occurs at Asn-1201.

Belongs to the ABC transporter superfamily. ABCB family. Multidrug resistance exporter (TC 3.A.1.201) subfamily.

Its subcellular location is the membrane. This Arabidopsis thaliana (Mouse-ear cress) protein is ABC transporter B family member 18 (ABCB18).